Consider the following 230-residue polypeptide: 7-cyano-7-deazaguanine synthase (230 aa).

An ATP-binding site is contributed by 9–19 (ISGGLDSTTCL). Residues Cys192, Cys202, Cys205, and Cys208 each coordinate Zn(2+).

It belongs to the QueC family. Zn(2+) serves as cofactor.

The enzyme catalyses 7-carboxy-7-deazaguanine + NH4(+) + ATP = 7-cyano-7-deazaguanine + ADP + phosphate + H2O + H(+). Its pathway is purine metabolism; 7-cyano-7-deazaguanine biosynthesis. Catalyzes the ATP-dependent conversion of 7-carboxy-7-deazaguanine (CDG) to 7-cyano-7-deazaguanine (preQ(0)). In Myxococcus xanthus (strain DK1622), this protein is 7-cyano-7-deazaguanine synthase.